Consider the following 2285-residue polypeptide: AT-rich interactive domain-containing protein 1A (2285 aa).

Over residues Met-1–Gly-14 the composition is skewed to low complexity. 2 disordered regions span residues Met-1–Asn-820 and Ala-978–Asn-1005. The residue at position 2 (Ala-2) is an N-acetylalanine. Basic and acidic residues predominate over residues Glu-23–Ala-35. Ser-58 and Ser-79 each carry phosphoserine. Gly residues-rich tracts occupy residues Ser-79 to Gly-95 and Pro-121 to Asp-130. 3 stretches are compositionally biased toward low complexity: residues Gly-131–Ala-142, Tyr-212–Ala-221, and Ala-228–Ser-265. Position 233 is a phosphoserine (Ser-233). Residues Ala-273 to Thr-286 are compositionally biased toward gly residues. The residue at position 286 (Thr-286) is a Phosphothreonine. The LXXLL motif lies at Leu-295–Leu-299. Residues Leu-295–Arg-306 are compositionally biased toward polar residues. Ser-301 carries the post-translational modification Phosphoserine. Residues Gly-310–Lys-327 show a composition bias toward gly residues. Positions Gly-338–Ala-353 are enriched in low complexity. Residues Ser-363 and Ser-382 each carry the phosphoserine modification. The segment covering Pro-400–Gln-425 has biased composition (low complexity). The residue at position 429 (Arg-429) is an Asymmetric dimethylarginine. Low complexity-rich tracts occupy residues Tyr-447–Gln-457, Gln-465–Gln-546, and Gln-553–Gln-595. Ser-604 carries the phosphoserine modification. The span at Ser-610–Ser-621 shows a compositional bias: low complexity. Residues Met-628–Ser-637 show a composition bias toward polar residues. Positions Ser-658–Ser-674 are enriched in low complexity. Polar residues predominate over residues Asn-675 to Thr-685. 6 positions are modified to phosphoserine: Ser-696, Ser-698, Ser-702, Ser-730, Ser-764, and Ser-772. Polar residues-rich tracts occupy residues Ser-730 to Ala-747 and Arg-755 to Met-793. Residues Gly-797–Gly-807 are compositionally biased toward gly residues. A compositionally biased stretch (low complexity) spans Gly-808 to Asn-820. Residues Glu-1017 to Glu-1108 form the ARID domain. 2 disordered regions span residues Pro-1113–Gly-1483 and Ala-1539–Lys-1603. Low complexity predominate over residues Met-1141–Met-1154. The segment covering Pro-1162–Pro-1177 has biased composition (pro residues). The residue at position 1184 (Ser-1184) is a Phosphoserine. The segment covering Gly-1194–Asp-1219 has biased composition (polar residues). A Phosphoserine modification is found at Ser-1235. Residue Arg-1276 is modified to Omega-N-methylarginine. 2 stretches are compositionally biased toward polar residues: residues Asn-1299 to Asp-1315 and Tyr-1339 to Ser-1356. Low complexity predominate over residues Gln-1357–Gln-1367. The Nuclear localization signal signature appears at Asn-1368 to Glu-1387. Over residues Gly-1396 to Gln-1425 the composition is skewed to low complexity. The span at Pro-1468–Pro-1477 shows a compositional bias: polar residues. Pro residues predominate over residues Pro-1554–Ser-1577. Position 1604 is a phosphoserine (Ser-1604). Lys-1612 is modified (N6-acetyllysine). The LXXLL motif lies at Leu-1709–Leu-1713. Disordered regions lie at residues Pro-1747–Glu-1774 and Phe-1859–Ile-1907. Residues Ser-1751 and Ser-1754 each carry the phosphoserine modification. A compositionally biased stretch (acidic residues) spans Gly-1761–Glu-1774. A compositionally biased stretch (low complexity) spans Glu-1886–Glu-1895. Residue Thr-1888 is modified to Phosphothreonine. Lys-1905 carries the N6-acetyllysine modification. A phosphoserine mark is found at Ser-1929 and Ser-1944. Short sequence motifs (LXXLL) lie at residues Leu-1967 to Leu-1971 and Leu-2085 to Leu-2089.

As to quaternary structure, component of SWI/SNF chromatin remodeling complexes, in some of which it can be mutually exclusive with ARID1B/BAF250B. The canonical complex contains a catalytic subunit (either SMARCA4/BRG1/BAF190A or SMARCA2/BRM/BAF190B) and at least SMARCE1, ACTL6A/BAF53, SMARCC1/BAF155, SMARCC2/BAF170, and SMARCB1/SNF5/BAF47. Other subunits specific to each of the complexes may also be present permitting several possible combinations developmentally and tissue specific. Component of the BAF (SWI/SNF-A) complex, which includes at least actin (ACTB), ARID1A/BAF250A, ARID1B/BAF250B, SMARCA2/BRM, SMARCA4/BRG1/BAF190A, ACTL6A/BAF53, ACTL6B/BAF53B, SMARCE1/BAF57, SMARCC1/BAF155, SMARCC2/BAF170, SMARCB1/SNF5/INI1, and one or more SMARCD1/BAF60A, SMARCD2/BAF60B, or SMARCD3/BAF60C. In muscle cells, the BAF complex also contains DPF3. Component of neural progenitors-specific chromatin remodeling complex (npBAF complex) composed of at least, ARID1A/BAF250A or ARID1B/BAF250B, SMARCD1/BAF60A, SMARCD3/BAF60C, SMARCA2/BRM/BAF190B, SMARCA4/BRG1/BAF190A, SMARCB1/BAF47, SMARCC1/BAF155, SMARCE1/BAF57, SMARCC2/BAF170, PHF10/BAF45A, ACTL6A/BAF53A and actin. Component of neuron-specific chromatin remodeling complex (nBAF complex) composed of at least, ARID1A/BAF250A or ARID1B/BAF250B, SMARCD1/BAF60A, SMARCD3/BAF60C, SMARCA2/BRM/BAF190B, SMARCA4/BRG1/BAF190A, SMARCB1/BAF47, SMARCC1/BAF155, SMARCE1/BAF57, SMARCC2/BAF170, DPF1/BAF45B, DPF3/BAF45C, ACTL6B/BAF53B and actin. Component of a SWI/SNF-like EBAFa complex, at least composed of SMARCA4/BRG1/BAF190A, SMARCB1/BAF47/SNF5, ACTL6A/BAF53A, SMARCE1/BAF57, SMARCD1/BAF60A, SMARCC1/BAF155, SMARCC2/BAF170, BAF250A and MLLT1/ENL. Interacts through its C-terminus with SMARCA2/BRM/BAF190B and SMARCA4/BRG1/BAF190A. Interacts with SMARCC1/BAF155. Interacts with FOS, FOSB isoform 1 and 2, FOSL1 and FOSL2. Highly expressed in spleen, thymus, prostate, testis, ovary, small intestine, colon, and PBL, and at a much lower level in heart, brain, placenta, lung, liver, skeletal muscle, kidney, and pancreas.

Its subcellular location is the nucleus. Functionally, involved in transcriptional activation and repression of select genes by chromatin remodeling (alteration of DNA-nucleosome topology). Component of SWI/SNF chromatin remodeling complexes that carry out key enzymatic activities, changing chromatin structure by altering DNA-histone contacts within a nucleosome in an ATP-dependent manner. Binds DNA non-specifically. Belongs to the neural progenitors-specific chromatin remodeling complex (npBAF complex) and the neuron-specific chromatin remodeling complex (nBAF complex). During neural development a switch from a stem/progenitor to a postmitotic chromatin remodeling mechanism occurs as neurons exit the cell cycle and become committed to their adult state. The transition from proliferating neural stem/progenitor cells to postmitotic neurons requires a switch in subunit composition of the npBAF and nBAF complexes. As neural progenitors exit mitosis and differentiate into neurons, npBAF complexes which contain ACTL6A/BAF53A and PHF10/BAF45A, are exchanged for homologous alternative ACTL6B/BAF53B and DPF1/BAF45B or DPF3/BAF45C subunits in neuron-specific complexes (nBAF). The npBAF complex is essential for the self-renewal/proliferative capacity of the multipotent neural stem cells. The nBAF complex along with CREST plays a role regulating the activity of genes essential for dendrite growth. The protein is AT-rich interactive domain-containing protein 1A (ARID1A) of Homo sapiens (Human).